We begin with the raw amino-acid sequence, 239 residues long: Ribonuclease HII (239 aa).

The RNase H type-2 domain occupies 30–221; that stretch reads GPVAGVDEVG…VRRLVTAGTP (192 aa). Aspartate 36, glutamate 37, and aspartate 130 together coordinate a divalent metal cation.

It belongs to the RNase HII family. The cofactor is Mn(2+). It depends on Mg(2+) as a cofactor.

The protein resides in the cytoplasm. It carries out the reaction Endonucleolytic cleavage to 5'-phosphomonoester.. In terms of biological role, endonuclease that specifically degrades the RNA of RNA-DNA hybrids. The polypeptide is Ribonuclease HII (Mycobacterium sp. (strain KMS)).